Here is a 237-residue protein sequence, read N- to C-terminus: Protein YIPF4 (237 aa).

The Cytoplasmic portion of the chain corresponds to 1–106; it reads MQFSPTNGDF…FNRQVVRDNP (106 aa). A helical transmembrane segment spans residues 107-127; it reads DFWGPLAVVLLFSMISIYGQF. Over 128–131 the chain is Lumenal; sequence RVVS. Residues 132 to 152 form a helical membrane-spanning segment; it reads WIITIWIFGSLTIFLLARVLG. The Cytoplasmic segment spans residues 153–160; the sequence is GEVSYGQV. Residues 161-181 traverse the membrane as a helical segment; that stretch reads LGVIGYSLLPLIVIAPLLLVI. Over 182–188 the chain is Lumenal; it reads GGFEVVS. Residues 189–209 traverse the membrane as a helical segment; that stretch reads TLIKLFGVFWAAYSAASLLVG. The Cytoplasmic portion of the chain corresponds to 210 to 216; the sequence is DEFKTKK. A helical transmembrane segment spans residues 217–237; it reads PLLIYPIFLLYIYFLSLYTGV.

It belongs to the YIP1 family.

Its subcellular location is the golgi apparatus. It is found in the cis-Golgi network membrane. Functionally, involved in the maintenance of the Golgi structure. The chain is Protein YIPF4 (yipf4) from Danio rerio (Zebrafish).